We begin with the raw amino-acid sequence, 177 residues long: Large ribosomal subunit protein uL6 (177 aa).

The protein belongs to the universal ribosomal protein uL6 family. Part of the 50S ribosomal subunit.

Functionally, this protein binds to the 23S rRNA, and is important in its secondary structure. It is located near the subunit interface in the base of the L7/L12 stalk, and near the tRNA binding site of the peptidyltransferase center. In Klebsiella pneumoniae (strain 342), this protein is Large ribosomal subunit protein uL6.